Reading from the N-terminus, the 319-residue chain is ATP-dependent 6-phosphofructokinase (319 aa).

Gly-11 serves as a coordination point for ATP. 21 to 25 (RAVVR) contacts ADP. Residues 72 to 73 (RC) and 102 to 105 (GDGS) each bind ATP. Residue Asp-103 coordinates Mg(2+). 125–127 (TID) contacts substrate. Residue Asp-127 is the Proton acceptor of the active site. Arg-154 serves as a coordination point for ADP. Substrate-binding positions include Arg-162 and 169-171 (MGR). ADP contacts are provided by residues 185–187 (GAE), Arg-211, and 213–215 (KLH). Residues Glu-222, Arg-243, and 249 to 252 (HIQR) contribute to the substrate site.

This sequence belongs to the phosphofructokinase type A (PFKA) family. ATP-dependent PFK group I subfamily. Prokaryotic clade 'B1' sub-subfamily. Homotetramer. Mg(2+) serves as cofactor.

It localises to the cytoplasm. The enzyme catalyses beta-D-fructose 6-phosphate + ATP = beta-D-fructose 1,6-bisphosphate + ADP + H(+). It functions in the pathway carbohydrate degradation; glycolysis; D-glyceraldehyde 3-phosphate and glycerone phosphate from D-glucose: step 3/4. Allosterically activated by ADP and other diphosphonucleosides, and allosterically inhibited by phosphoenolpyruvate. Catalyzes the phosphorylation of D-fructose 6-phosphate to fructose 1,6-bisphosphate by ATP, the first committing step of glycolysis. The protein is ATP-dependent 6-phosphofructokinase of Alkaliphilus metalliredigens (strain QYMF).